Here is a 192-residue protein sequence, read N- to C-terminus: Adenylate kinase (192 aa).

10-15 (GAGKGT) is a binding site for ATP. Positions 30–56 (GTGGMLRALEPESGEQIHLRIDRGHFA) are NMP. AMP is bound by residues Thr-31, Arg-36, 82 to 85 (GFPR), and Gln-89. The LID stretch occupies residues 123-133 (KRGETENRADD). Arg-124 is an ATP binding site. The AMP site is built by Arg-130 and Arg-141. Asp-169 is a binding site for ATP.

Belongs to the adenylate kinase family. As to quaternary structure, monomer.

The protein resides in the cytoplasm. The catalysed reaction is AMP + ATP = 2 ADP. The protein operates within purine metabolism; AMP biosynthesis via salvage pathway; AMP from ADP: step 1/1. In terms of biological role, catalyzes the reversible transfer of the terminal phosphate group between ATP and AMP. Plays an important role in cellular energy homeostasis and in adenine nucleotide metabolism. The chain is Adenylate kinase from Rhodopirellula baltica (strain DSM 10527 / NCIMB 13988 / SH1).